The following is a 240-amino-acid chain: MASDAKFRRVLLKISGEGLMGTREYGLDPETVDRIAREVKSVRDLGVEVCVVIGGGNIFRGVSGASSGMERAAADNMGMLATVINALSVQNALEKVGVETRVQSAIVMPTVCEAFIRRRAIRHLEKGRVVIFAAGTGNPFFTTDTAAALRAVEMGCDALLKATQVDGVYSADPKKVKDAVRYDRLTFNEVLARDLAVMDTSAIALCRENKVPIVVFDLHRPGAFAETVSGRGLFTIIAND.

13-16 is an ATP binding site; that stretch reads KISG. Glycine 55 contacts UMP. ATP is bound by residues glycine 56 and arginine 60. Residues aspartate 75 and 136–143 each bind UMP; that span reads TGNPFFTT. 4 residues coordinate ATP: threonine 163, glutamine 164, tyrosine 169, and aspartate 172.

This sequence belongs to the UMP kinase family. In terms of assembly, homohexamer.

The protein localises to the cytoplasm. The catalysed reaction is UMP + ATP = UDP + ADP. The protein operates within pyrimidine metabolism; CTP biosynthesis via de novo pathway; UDP from UMP (UMPK route): step 1/1. Inhibited by UTP. Its function is as follows. Catalyzes the reversible phosphorylation of UMP to UDP. In Paramagnetospirillum magneticum (strain ATCC 700264 / AMB-1) (Magnetospirillum magneticum), this protein is Uridylate kinase.